The sequence spans 489 residues: Glycogen synthase (489 aa).

Lys15 is a binding site for ADP-alpha-D-glucose.

It belongs to the glycosyltransferase 1 family. Bacterial/plant glycogen synthase subfamily.

The enzyme catalyses [(1-&gt;4)-alpha-D-glucosyl](n) + ADP-alpha-D-glucose = [(1-&gt;4)-alpha-D-glucosyl](n+1) + ADP + H(+). Its pathway is glycan biosynthesis; glycogen biosynthesis. Its function is as follows. Synthesizes alpha-1,4-glucan chains using ADP-glucose. The polypeptide is Glycogen synthase (Francisella tularensis subsp. novicida (strain U112)).